The chain runs to 229 residues: 4-hydroxy-tetrahydrodipicolinate reductase (229 aa).

NAD(+) is bound by residues Gly-10–Met-15, Gly-78–Thr-80, and Ser-102–Met-105. His-133 acts as the Proton donor/acceptor in catalysis. His-134 is a binding site for (S)-2,3,4,5-tetrahydrodipicolinate. Residue Lys-137 is the Proton donor of the active site. Gly-143–Thr-144 serves as a coordination point for (S)-2,3,4,5-tetrahydrodipicolinate.

This sequence belongs to the DapB family.

It localises to the cytoplasm. It carries out the reaction (S)-2,3,4,5-tetrahydrodipicolinate + NAD(+) + H2O = (2S,4S)-4-hydroxy-2,3,4,5-tetrahydrodipicolinate + NADH + H(+). The enzyme catalyses (S)-2,3,4,5-tetrahydrodipicolinate + NADP(+) + H2O = (2S,4S)-4-hydroxy-2,3,4,5-tetrahydrodipicolinate + NADPH + H(+). It participates in amino-acid biosynthesis; L-lysine biosynthesis via DAP pathway; (S)-tetrahydrodipicolinate from L-aspartate: step 4/4. Functionally, catalyzes the conversion of 4-hydroxy-tetrahydrodipicolinate (HTPA) to tetrahydrodipicolinate. This chain is 4-hydroxy-tetrahydrodipicolinate reductase, found in Bdellovibrio bacteriovorus (strain ATCC 15356 / DSM 50701 / NCIMB 9529 / HD100).